We begin with the raw amino-acid sequence, 794 residues long: K(+)-insensitive pyrophosphate-energized proton pump (794 aa).

Helical transmembrane passes span 20-40 (ALVA…GVLV), 74-94 (TLGV…ADDW), 102-122 (IFFL…MWLA), 163-183 (GVVG…VVLV), and 194-214 (GFGL…GIFT). Lys215 serves as a coordination point for substrate. The Mg(2+) site is built by Asp218, Asp222, Asn245, and Asp248. 6 helical membrane passes run 264 to 284 (YAVT…DFGL), 285 to 305 (AFPL…IFAV), 321 to 341 (GFFI…FVYL), 365 to 385 (ILAL…QQLT), 422 to 442 (AVYT…LGGT), and 446 to 466 (LALF…GVIV). Position 476 (Asp476) interacts with Mg(2+). Helical transmembrane passes span 508 to 528 (AITK…LFGS), 564 to 584 (VGLI…INAV), and 641 to 661 (IFIG…GAIG). 3 residues coordinate Ca(2+): Asp678, Asp704, and Asp708. Lys711 serves as a coordination point for substrate. 2 helical membrane passes run 717-737 (AINP…PAVI) and 747-767 (VVVR…AVYV).

Belongs to the H(+)-translocating pyrophosphatase (TC 3.A.10) family. K(+)-insensitive subfamily. Homodimer. It depends on Mg(2+) as a cofactor.

The protein localises to the cell membrane. It catalyses the reaction diphosphate + H2O + H(+)(in) = 2 phosphate + 2 H(+)(out). Its function is as follows. Proton pump that utilizes the energy of pyrophosphate hydrolysis as the driving force for proton movement across the membrane. Generates a proton motive force. The protein is K(+)-insensitive pyrophosphate-energized proton pump of Streptomyces coelicolor (strain ATCC BAA-471 / A3(2) / M145).